The chain runs to 1056 residues: Potassium transporter TRK1 (1056 aa).

At 1 to 46 (MLYRVSGFYKRHTRNFTNIDYGYYIRNFIHHIASKIYPYAKVVLPN) the chain is on the cytoplasmic side. The chain crosses the membrane as a helical span at residues 47–67 (FRAAHYFYILTLVILGSILVY). Residues 68–73 (PVKTCA) are Extracellular-facing. An intramembrane segment occupies 74–90 (YIDVLFFTAGASTQAGL). Residues 91-99 (NTVNVNDLS) are Extracellular-facing. A helical transmembrane segment spans residues 100–122 (LYQQIVLYLLATLATPIFIHGSL). Residues 123–622 (LFVRLYYFER…LGGIEYRAVK (500 aa)) are Cytoplasmic-facing. 3 disordered regions span residues 180–276 (REAE…IDPE), 290–350 (KNQE…EDED), and 404–571 (PWTS…SIEN). Over residues 186–203 (SSSSPQSSSSQTSQPVST) the composition is skewed to low complexity. Residues 236–245 (EKIHFEEPQR) show a composition bias toward basic and acidic residues. A compositionally biased stretch (polar residues) spans 335–344 (PATNSVGTGN). Over residues 412-423 (TLSNSSKKGSLS) the composition is skewed to low complexity. Acidic residues-rich tracts occupy residues 428–449 (DTEDDSEDEEYASIDSETSDIS) and 469–487 (YEEDEDEDEHNSDDDDDGE). Positions 521 to 533 (RSNTLDTPQQNTS) are enriched in polar residues. Positions 537–549 (KIRKKAPKRKTPR) are enriched in basic residues. Over residues 553-563 (NASFNQHSNVS) the composition is skewed to polar residues. A helical membrane pass occupies residues 623-646 (LLIKIIVVYYVGFNIIPGVMLSIW). The Extracellular portion of the chain corresponds to 647 to 665 (IYCMPHYKNLMISSSISPA). An intramembrane segment occupies 666-682 (WWAFFTSQSSFNDLGLT). Topologically, residues 683-693 (LTSNSMMSFNQ) are extracellular. Residues 694–710 (NAFVQILCSFLIVIGNT) traverse the membrane as a helical segment. The Cytoplasmic segment spans residues 711-754 (GFPILLRFIIWVMFKTARPLSLYKESLGFLLDHPRRCFTLLFPS). The chain crosses the membrane as a helical span at residues 755–778 (VPTWWLFFILVVLNGFDLVIFCIL). At 779–793 (DLHDDTFKGVDMGYR) the chain is on the extracellular side. An intramembrane segment occupies 794-810 (VLNGLFQAFCTRTVGFS). Residues 811-817 (VMDLSQL) are Extracellular-facing. The helical transmembrane segment at 818 to 841 (HAATQVSYLIMMYISVLPIAISVR) threads the bilayer. Topologically, residues 842-874 (RTNVYEEQSLGVYAKENAEGVDESAPSNYVGSH) are cytoplasmic. A helical membrane pass occupies residues 875–896 (LRNQLSYDLWYICLGLFIICIA). Residues 897–909 (EGKRLKEQDLRFS) are Extracellular-facing. An intramembrane segment occupies 910–928 (IFAVLFEIVSAYGTVGMSM). The Extracellular segment spans residues 929–942 (GYPGVDCSLSGEFN). A helical transmembrane segment spans residues 943–965 (VISKLVIIAMMIRGRHRGLPYTI). At 966-1056 (DRAIMLPNAA…RYVVRTVSEV (91 aa)) the chain is on the cytoplasmic side.

This sequence belongs to the TrkH potassium transport family.

Its subcellular location is the cell membrane. The enzyme catalyses K(+)(in) = K(+)(out). The catalysed reaction is chloride(in) = chloride(out). Its activity is regulated as follows. TRK1-mediated chloride conductance is blocked by 4,4'-diisothiocyanatostilbene-2,2'-disulfonic acid. Functionally, potassium transporter that mediates K(+) influx, as well as Cl(-) efflux as a secondary function. TRK1 is the major K(+) uptake transporter that regulates membrane potential and intracellular pH. The TRK1-mediated Cl(-) efflux should serve as a Cl(-) detoxification route and may play a role in sustaining C.albicans on mammalian epithelial surfaces, or in physiological saline solutions such as saliva. Its function is as follows. Mediates candidacidal activities of cysteine-free peptides, but not of defensins. The hallmark of salivary gland-secreted histatin-5 (Hst 5) killing of C.albicans is the rapid efflux of cellular ATP and other small nucleotides and ions from the cell as well as concurrent intracellular uptake of propidium iodide (PI). TRK1 is the channel for Hst 5-induced killing and histatin-5 may directly or indirectly alter TRK1 function, allowing the efflux of larger anions, including ATP, and the influx of small cationic dyes, such as PI. The polypeptide is Potassium transporter TRK1 (Candida albicans (strain SC5314 / ATCC MYA-2876) (Yeast)).